Reading from the N-terminus, the 259-residue chain is E3 ubiquitin-protein ligase RNF170 (259 aa).

Residues 1 to 25 are Lumenal-facing; that stretch reads MAKYQGEVQSLKLDDDSVIEGVSDQ. A helical membrane pass occupies residues 26 to 46; it reads VLVAVVVSLALIATLVYALFS. Over 47–202 the chain is Cytoplasmic; sequence RNAHQNIHPE…GGLFWMFRIR (156 aa). The segment at 88–131 adopts an RING-type zinc-finger fold; sequence CPICLHQASLPVETNCGHLFCGTCIVAYWRYGSWLGAISCPICR. The helical transmembrane segment at 203-223 threads the bilayer; sequence IILCLMGAFFYLISPLDFVPE. Ala-224 is a topological domain (lumenal). The chain crosses the membrane as a helical span at residues 225 to 245; the sequence is LFGILGFLDDFFVIFLLLIYI. Residues 246–259 lie on the Cytoplasmic side of the membrane; the sequence is SIMYREVITQRLNR.

In terms of assembly, constitutively associated with the ERLIN1/ERLIN 2 complex. Interacts with activated ITPR1.

Its subcellular location is the endoplasmic reticulum membrane. The enzyme catalyses S-ubiquitinyl-[E2 ubiquitin-conjugating enzyme]-L-cysteine + [acceptor protein]-L-lysine = [E2 ubiquitin-conjugating enzyme]-L-cysteine + N(6)-ubiquitinyl-[acceptor protein]-L-lysine.. Its pathway is protein modification; protein ubiquitination. In terms of biological role, E3 ubiquitin-protein ligase. Plays an essential role in stimulus-induced inositol 1,4,5-trisphosphate receptor type 1 (ITPR1) ubiquitination and degradation via the endoplasmic reticulum-associated degradation (ERAD) pathway. Also involved in ITPR1 turnover in resting cells. Selectively inhibits the TLR3-triggered innate immune response by promoting the 'Lys-48'-linked polyubiquitination and degradation of TLR3. This chain is E3 ubiquitin-protein ligase RNF170 (RNF170), found in Bos taurus (Bovine).